The chain runs to 592 residues: Calnexin (592 aa).

Positions 1 to 20 (MEGKWLLCMLLVLGTAIVEA) are cleaved as a signal peptide. The Lumenal portion of the chain corresponds to 21-481 (HDGHDDDVID…QMIEAAEERP (461 aa)). Ca(2+)-binding residues include serine 74 and aspartate 117. An N6-acetyllysine modification is found at lysine 137. A disulfide bond links cysteine 160 and cysteine 194. An alpha-D-glucoside contacts are provided by tyrosine 164, lysine 166, tyrosine 185, and aspartate 192. The segment at 260 to 345 (GNLLNDMTPP…AEKPEDWDED (86 aa)) is disordered. A compositionally biased stretch (basic and acidic residues) spans 274 to 319 (REIEDPEDRKPEDWDERPKIPDPEAVKPDDWDEDAPAKIPDEEATK). The tract at residues 276-409 (IEDPEDRKPE…RKIPNPDFFE (134 aa)) is p domain (Extended arm). 5 consecutive repeat copies span residues 278 to 290 (DPED…WDER), 295 to 307 (DPEA…WDED), 314 to 326 (DEEA…WLDD), 333 to 345 (DPDA…WDED), and 348 to 358 (GEWEAPQIANP). 4 X approximate repeats regions lie at residues 278-345 (DPED…WDED) and 348-405 (GEWE…IPNP). The span at 323–345 (WLDDEPEYVPDPDAEKPEDWDED) shows a compositional bias: acidic residues. The tract at residues 326–359 (DEPEYVPDPDAEKPEDWDEDMDGEWEAPQIANPR) is interaction with PPIB. Cysteine 360 and cysteine 366 are oxidised to a cystine. 3 tandem repeats follow at residues 367–377 (GVWQRPVIDNP), 381–391 (GKWKPPMIDNP), and 395–405 (GIWKPRKIPNP). Glutamate 425 serves as a coordination point for an alpha-D-glucoside. A Ca(2+)-binding site is contributed by aspartate 436. The chain crosses the membrane as a helical span at residues 482 to 502 (WLWVVYILTVALPVFLVILFC). S-palmitoyl cysteine attachment occurs at residues cysteine 502 and cysteine 503. The Cytoplasmic segment spans residues 503–592 (CSGKKQTSGM…SPRNRKPRRE (90 aa)). The sufficient to mediate interaction with SGIP1 stretch occupies residues 503-592 (CSGKKQTSGM…SPRNRKPRRE (90 aa)). Residues 511-592 (GMEYKKTDAP…SPRNRKPRRE (82 aa)) form a disordered region. The span at 525 to 547 (KEEEEEKEEEKDKGDEEEEGEEK) shows a compositional bias: acidic residues. Serine 554 carries the phosphoserine modification. The residue at position 562 (threonine 562) is a Phosphothreonine. Serine 564 is subject to Phosphoserine; by MAPK3. Serine 583 is subject to Phosphoserine.

It belongs to the calreticulin family. As to quaternary structure, interacts with MAPK3/ERK1. Interacts with KCNH2. Associates with ribosomes. Interacts with SGIP1; involved in negative regulation of endocytosis. The palmitoylated form interacts with the ribosome-translocon complex component SSR1, promoting efficient folding of glycoproteins. Interacts with SERPINA2P/SERPINA2 and with the S and Z variants of SERPINA1. Interacts with PPIB. Interacts with ZNRF4. Interacts with SMIM22. Interacts with TMX2. Interacts with TMEM35A/NACHO. Interacts with CHRNA7. Interacts with reticulophagy regulators RETREG2 and RETREG3. Interacts with DNM1L; may form part of a larger protein complex at the ER-mitochondrial interface during mitochondrial fission. Interacts with ADAM7. In terms of assembly, (Microbial infection) Interacts with HBV large envelope protein, isoform L. (Microbial infection) Interacts with HBV large envelope protein, isoform M; this association may be essential for isoform M proper secretion. Phosphorylated at Ser-564 by MAPK3/ERK1. Phosphorylation by MAPK3/ERK1 increases its association with ribosomes. Post-translationally, palmitoylation by DHHC6 leads to the preferential localization to the perinuclear rough ER. It mediates the association of calnexin with the ribosome-translocon complex (RTC) which is required for efficient folding of glycosylated proteins. In terms of processing, ubiquitinated, leading to proteasomal degradation. Probably ubiquitinated by ZNRF4.

It localises to the endoplasmic reticulum membrane. Its subcellular location is the mitochondrion membrane. It is found in the melanosome membrane. Functionally, calcium-binding protein that interacts with newly synthesized monoglucosylated glycoproteins in the endoplasmic reticulum. It may act in assisting protein assembly and/or in the retention within the ER of unassembled protein subunits. It seems to play a major role in the quality control apparatus of the ER by the retention of incorrectly folded proteins. Associated with partial T-cell antigen receptor complexes that escape the ER of immature thymocytes, it may function as a signaling complex regulating thymocyte maturation. Additionally it may play a role in receptor-mediated endocytosis at the synapse. The polypeptide is Calnexin (CANX) (Homo sapiens (Human)).